We begin with the raw amino-acid sequence, 53 residues long: Large ribosomal subunit protein bL32c (53 aa).

The protein belongs to the bacterial ribosomal protein bL32 family.

It localises to the plastid. The protein resides in the chloroplast. The protein is Large ribosomal subunit protein bL32c of Phaseolus vulgaris (Kidney bean).